The chain runs to 603 residues: Membrane protein insertase YidC (603 aa).

The chain crosses the membrane as a helical span at residues 7-27 (FFITIALSVLILAVWQYFYVL). A compositionally biased stretch (basic and acidic residues) spans 38–51 (RVEQQRVEEQKKAA). The interval 38–76 (RVEQQRVEEQKKAAEAANPGAGTPAPAPGTIPNAPGGDT) is disordered. Positions 52 to 74 (EAANPGAGTPAPAPGTIPNAPGG) are enriched in low complexity. 5 helical membrane passes run 352–372 (FDLL…FWLI), 378–398 (FLGN…ALFF), 452–472 (WPVA…YITI), 497–517 (LFGL…WPLI), and 540–560 (IFTW…AGLV).

The protein belongs to the OXA1/ALB3/YidC family. Type 1 subfamily. Interacts with the Sec translocase complex via SecD. Specifically interacts with transmembrane segments of nascent integral membrane proteins during membrane integration.

The protein resides in the cell inner membrane. Functionally, required for the insertion and/or proper folding and/or complex formation of integral membrane proteins into the membrane. Involved in integration of membrane proteins that insert both dependently and independently of the Sec translocase complex, as well as at least some lipoproteins. Aids folding of multispanning membrane proteins. In Mesorhizobium japonicum (strain LMG 29417 / CECT 9101 / MAFF 303099) (Mesorhizobium loti (strain MAFF 303099)), this protein is Membrane protein insertase YidC.